The primary structure comprises 88 residues: MAQKTFKVTADSGIHARPATVLVQTASKYDADVNLEYNGKTVNLKSIMGVMSLGIAKGAEITISASGADENDALNALEETMKSEGLGE.

The HPr domain maps to 2 to 88; it reads AQKTFKVTAD…ETMKSEGLGE (87 aa). A Phosphoserine modification is found at S12. The active-site Pros-phosphohistidine intermediate; alternate is the H15. A Tele-phosphohistidine; alternate modification is found at H15. Phosphoserine; by HPrK/P is present on S46.

This sequence belongs to the HPr family. Post-translationally, phosphorylated during sporulation.

The protein resides in the cytoplasm. With respect to regulation, phosphorylation on Ser-46 inhibits the phosphoryl transfer from enzyme I to HPr. In terms of biological role, general (non sugar-specific) component of the phosphoenolpyruvate-dependent sugar phosphotransferase system (sugar PTS). This major carbohydrate active-transport system catalyzes the phosphorylation of incoming sugar substrates concomitantly with their translocation across the cell membrane. The phosphoryl group from phosphoenolpyruvate (PEP) is transferred to the phosphoryl carrier protein HPr by enzyme I. Phospho-HPr then transfers it to the PTS EIIA domain. Functionally, P-Ser-HPr interacts with the catabolite control protein A (CcpA), forming a complex that binds to DNA at the catabolite response elements cre, operator sites preceding a large number of catabolite-regulated genes. Thus, P-Ser-HPr is a corepressor in carbon catabolite repression (CCR), a mechanism that allows bacteria to coordinate and optimize the utilization of available carbon sources. P-Ser-HPr also plays a role in inducer exclusion, in which it probably interacts with several non-PTS permeases and inhibits their transport activity. The sequence is that of Phosphocarrier protein HPr (ptsH) from Bacillus subtilis (strain 168).